The primary structure comprises 82 residues: Probable acyl carrier protein IacP (82 aa).

The Carrier domain occupies 3–78 (MDIEARVKKV…DICRVVKKSL (76 aa)). The residue at position 38 (Ser-38) is an O-(pantetheine 4'-phosphoryl)serine.

Post-translationally, 4'-phosphopantetheine is transferred from CoA to a specific serine of apo-IacP.

Its subcellular location is the cytoplasm. In terms of biological role, acyl carrier protein. The protein is Probable acyl carrier protein IacP (iacP) of Salmonella typhimurium (strain SL1344).